The following is a 1203-amino-acid chain: DNA-directed RNA polymerase subunit beta' (1203 aa).

Zn(2+)-binding residues include Cys60, Cys62, Cys75, and Cys78. 3 residues coordinate Mg(2+): Asp449, Asp451, and Asp453. Zn(2+)-binding residues include Cys818, Cys892, Cys899, and Cys902.

The protein belongs to the RNA polymerase beta' chain family. As to quaternary structure, the RNAP catalytic core consists of 2 alpha, 1 beta, 1 beta' and 1 omega subunit. When a sigma factor is associated with the core the holoenzyme is formed, which can initiate transcription. Requires Mg(2+) as cofactor. Zn(2+) serves as cofactor.

It catalyses the reaction RNA(n) + a ribonucleoside 5'-triphosphate = RNA(n+1) + diphosphate. DNA-dependent RNA polymerase catalyzes the transcription of DNA into RNA using the four ribonucleoside triphosphates as substrates. The polypeptide is DNA-directed RNA polymerase subunit beta' (Bacillus cereus (strain ATCC 14579 / DSM 31 / CCUG 7414 / JCM 2152 / NBRC 15305 / NCIMB 9373 / NCTC 2599 / NRRL B-3711)).